The following is an 874-amino-acid chain: Leucine--tRNA ligase (874 aa).

The 'HIGH' region motif lies at 47-57 (PYPSGKLHMGH). The 'KMSKS' region signature appears at 636–640 (KMSKS). Position 639 (Lys-639) interacts with ATP.

It belongs to the class-I aminoacyl-tRNA synthetase family.

It is found in the cytoplasm. It catalyses the reaction tRNA(Leu) + L-leucine + ATP = L-leucyl-tRNA(Leu) + AMP + diphosphate. This Acinetobacter baumannii (strain AB307-0294) protein is Leucine--tRNA ligase.